Here is a 248-residue protein sequence, read N- to C-terminus: Triosephosphate isomerase (248 aa).

9-11 (NWK) serves as a coordination point for substrate. Catalysis depends on His-94, which acts as the Electrophile. Glu-166 serves as the catalytic Proton acceptor. Substrate contacts are provided by residues Gly-172, Ser-212, and 233-234 (GG).

It belongs to the triosephosphate isomerase family. In terms of assembly, homodimer.

It localises to the cytoplasm. It carries out the reaction D-glyceraldehyde 3-phosphate = dihydroxyacetone phosphate. Its pathway is carbohydrate biosynthesis; gluconeogenesis. The protein operates within carbohydrate degradation; glycolysis; D-glyceraldehyde 3-phosphate from glycerone phosphate: step 1/1. Its function is as follows. Involved in the gluconeogenesis. Catalyzes stereospecifically the conversion of dihydroxyacetone phosphate (DHAP) to D-glyceraldehyde-3-phosphate (G3P). The protein is Triosephosphate isomerase of Caldanaerobacter subterraneus subsp. tengcongensis (strain DSM 15242 / JCM 11007 / NBRC 100824 / MB4) (Thermoanaerobacter tengcongensis).